The sequence spans 196 residues: S-norcoclaurine synthase 2 (196 aa).

The signal sequence occupies residues 1-19; that stretch reads MRMEVVLVVFLMFIGTINC. 104–106 provides a ligand contact to dopamine; it reads YRE. Lys118 (proton donor) is an active-site residue. (4-hydroxyphenyl)acetaldehyde is bound at residue Asp137.

The protein belongs to the BetVI family.

It carries out the reaction (4-hydroxyphenyl)acetaldehyde + dopamine = (S)-norcoclaurine + H2O. With respect to regulation, not inhibited by O-phenanthroline or EDTA. Involved in the biosynthesis of the common precursor of all benzylisoquinoline alkaloids such as morphine, sanguinarine, codeine or berberine. Condenses dopamine and pyruvic acid or 4-hydroxyphenylpyruvate. This Coptis japonica (Japanese goldthread) protein is S-norcoclaurine synthase 2 (PR10A).